A 204-amino-acid polypeptide reads, in one-letter code: Terpene cyclase trt1 (204 aa).

The next 5 helical transmembrane spans lie at 44 to 64 (FMSI…YPIA), 67 to 87 (HWAG…FIVA), 103 to 122 (FARL…HLAL), 132 to 154 (FFWS…LVCR), and 169 to 189 (WFYI…FFYF).

Belongs to the paxB family.

The protein localises to the membrane. The protein operates within secondary metabolite biosynthesis; terpenoid biosynthesis. Its function is as follows. Terpene cyclase; part of the gene cluster that mediates the biosynthesis of terretonin, a fungal meroterpenoid that acts as a mycotoxin. The first step of the pathway is the synthesis of 3,5-dimethylorsellinic acid (DMOA) by the polyketide synthase trt4. DMOA is then prenylated into farnesyl-DMOA by the polyprenyl transferase trt2. Methylation by the methyltransferase trt5 then leads to farnesyl-DMOA methyl ester which is further subject to epoxidation by the FAD-dependent monooxygenase trt8 to yield epoxyfarnesyl-DMOA methyl ester. Cyclization of epoxyfarnesyl-DMOA methyl ester by the terpene cyclase trt1 leads to a tetracycle intermediate which is in turn converted to preterretonin. Dehydrogenase trt9 comes next to transform preterretonin to preterrenoid. The FAD-dependent monooxygenase trt3 is then required for the C-hydroxylation at C16 of preterrenoid to yield terrenoid. The cytochrome P450 trt6 catalyzes three successive oxidations to transform terrenoid into an unstable intermediate, which then undergoes the D-ring expansion and unusual rearrangement of the methoxy group to afford the core skeleton of terretonin. Trt14 catalyzes the D-ring expansion of terretonin involving intramolecular methoxy rearrangement as well as the hydrolysis of the expanded D-ring and the methyl ester moiety. Finally, the nonheme iron-dependent dioxygenase trt7 accomplishes the last two oxidation reactions steps to complete the biosynthesis of terretonin. Terretonin C is produced via spontaneous decarboxylation of the terretonin precursor. Another shunt product of the terretonin biosynthesis is dihydrofarnesyl-DMOA, derived from epoxyfarnesyl-DMOA through hydrolysis of the epoxide. In Aspergillus terreus (strain NIH 2624 / FGSC A1156), this protein is Terpene cyclase trt1.